Consider the following 309-residue polypeptide: Porphobilinogen deaminase (309 aa).

The residue at position 243 (Cys-243) is an S-(dipyrrolylmethanemethyl)cysteine.

Belongs to the HMBS family. As to quaternary structure, monomer. The cofactor is dipyrromethane.

The catalysed reaction is 4 porphobilinogen + H2O = hydroxymethylbilane + 4 NH4(+). Its pathway is porphyrin-containing compound metabolism; protoporphyrin-IX biosynthesis; coproporphyrinogen-III from 5-aminolevulinate: step 2/4. Functionally, tetrapolymerization of the monopyrrole PBG into the hydroxymethylbilane pre-uroporphyrinogen in several discrete steps. The polypeptide is Porphobilinogen deaminase (hemC) (Deinococcus radiodurans (strain ATCC 13939 / DSM 20539 / JCM 16871 / CCUG 27074 / LMG 4051 / NBRC 15346 / NCIMB 9279 / VKM B-1422 / R1)).